The following is a 203-amino-acid chain: N-(5'-phosphoribosyl)anthranilate isomerase (203 aa).

The protein belongs to the TrpF family.

The enzyme catalyses N-(5-phospho-beta-D-ribosyl)anthranilate = 1-(2-carboxyphenylamino)-1-deoxy-D-ribulose 5-phosphate. The protein operates within amino-acid biosynthesis; L-tryptophan biosynthesis; L-tryptophan from chorismate: step 3/5. The chain is N-(5'-phosphoribosyl)anthranilate isomerase from Geobacter sulfurreducens (strain ATCC 51573 / DSM 12127 / PCA).